Reading from the N-terminus, the 91-residue chain is Small ribosomal subunit protein bS18 (91 aa).

A disordered region spans residues 1–27 (MTQQSNTERKPRAKGPKRPRKPKVDPF). Positions 11 to 21 (PRAKGPKRPRK) are enriched in basic residues.

It belongs to the bacterial ribosomal protein bS18 family. As to quaternary structure, part of the 30S ribosomal subunit. Forms a tight heterodimer with protein bS6.

Binds as a heterodimer with protein bS6 to the central domain of the 16S rRNA, where it helps stabilize the platform of the 30S subunit. The chain is Small ribosomal subunit protein bS18 from Deinococcus geothermalis (strain DSM 11300 / CIP 105573 / AG-3a).